Consider the following 1075-residue polypeptide: Putative type I restriction enzyme MjaVIIP endonuclease subunit (1075 aa).

It belongs to the HsdR family. As to quaternary structure, the type I restriction/modification system is composed of three polypeptides R, M and S.

It carries out the reaction Endonucleolytic cleavage of DNA to give random double-stranded fragments with terminal 5'-phosphates, ATP is simultaneously hydrolyzed.. Functionally, the restriction (R) subunit of a type I restriction enzyme that recognizes 5'-CAAN(7)TGG-3' and cleaves a random distance away. The R subunit is required for both endonuclease and ATPase activities but not for modification. After locating a non-methylated recognition site, the enzyme complex serves as a molecular motor that translocates DNA in an ATP-dependent manner until a collision occurs that triggers cleavage. The chain is Putative type I restriction enzyme MjaVIIP endonuclease subunit from Methanocaldococcus jannaschii (strain ATCC 43067 / DSM 2661 / JAL-1 / JCM 10045 / NBRC 100440) (Methanococcus jannaschii).